A 377-amino-acid chain; its full sequence is Protein-tyrosine sulfotransferase 2 (377 aa).

Residues 1 to 8 are Cytoplasmic-facing; sequence MRLSMRRA. The chain crosses the membrane as a helical; Signal-anchor for type II membrane protein span at residues 9-25; that stretch reads LLAAGLALALVLAVHLG. Topologically, residues 26-377 are lumenal; the sequence is QRVLECQAVL…NSTSSHLGSS (352 aa). 3'-phosphoadenylyl sulfate is bound at residue 78–82; sequence RSGTT. A disulfide bond links Cys96 and Cys156. Glu99 (proton donor/acceptor) is an active-site residue. The interval 101-105 is interaction with peptide substrate; it reads RIIPR. 3'-phosphoadenylyl sulfate-binding residues include Arg183, Ser191, and Arg195. Cys225 and Cys233 form a disulfide bridge. 3'-phosphoadenylyl sulfate contacts are provided by residues Tyr238, 285 to 294, and Lys300; that span reads STDQVIKPVN. Asn343 and Asn368 each carry an N-linked (GlcNAc...) asparagine glycan.

It belongs to the protein sulfotransferase family. As to quaternary structure, homodimer. Can also form heterodimers with TPST1. In terms of processing, N-glycosylated.

It localises to the golgi apparatus membrane. The catalysed reaction is L-tyrosyl-[protein] + 3'-phosphoadenylyl sulfate = O-sulfo-L-tyrosine-[protein] + adenosine 3',5'-bisphosphate + H(+). Its function is as follows. Catalyzes the O-sulfation of tyrosine residues within acidic motifs of polypeptides, using 3'-phosphoadenylyl sulfate (PAPS) as cosubstrate. This is Protein-tyrosine sulfotransferase 2 (TPST2) from Bos taurus (Bovine).